Consider the following 120-residue polypeptide: MITKTSKNAARQKRHARVRAKLSGTAERPRLNVFRSNKHIYAQIIDDVNGVTLASASTLDKDLNVESTGDSAAAAKVGELVAKRASEKGVSDVVFDRGGYLYHGRVKALADAAREAGLKF.

A disordered region spans residues 1–22 (MITKTSKNAARQKRHARVRAKL). The span at 10-20 (ARQKRHARVRA) shows a compositional bias: basic residues.

The protein belongs to the universal ribosomal protein uL18 family. In terms of assembly, part of the 50S ribosomal subunit; part of the 5S rRNA/L5/L18/L25 subcomplex. Contacts the 5S and 23S rRNAs.

In terms of biological role, this is one of the proteins that bind and probably mediate the attachment of the 5S RNA into the large ribosomal subunit, where it forms part of the central protuberance. In Bacillus velezensis (strain DSM 23117 / BGSC 10A6 / LMG 26770 / FZB42) (Bacillus amyloliquefaciens subsp. plantarum), this protein is Large ribosomal subunit protein uL18.